Reading from the N-terminus, the 258-residue chain is Shikimate dehydrogenase (NADP(+)) (258 aa).

Residues 14–16 (SES) and Thr-61 contribute to the shikimate site. Lys-65 (proton acceptor) is an active-site residue. Asn-86 and Asp-101 together coordinate shikimate. NADP(+)-binding positions include 125-129 (GSGGS) and Leu-211. Tyr-213 serves as a coordination point for shikimate. Gly-234 lines the NADP(+) pocket.

The protein belongs to the shikimate dehydrogenase family. In terms of assembly, homodimer.

The catalysed reaction is shikimate + NADP(+) = 3-dehydroshikimate + NADPH + H(+). Its pathway is metabolic intermediate biosynthesis; chorismate biosynthesis; chorismate from D-erythrose 4-phosphate and phosphoenolpyruvate: step 4/7. In terms of biological role, involved in the biosynthesis of the chorismate, which leads to the biosynthesis of aromatic amino acids. Catalyzes the reversible NADPH linked reduction of 3-dehydroshikimate (DHSA) to yield shikimate (SA). The protein is Shikimate dehydrogenase (NADP(+)) of Clostridium botulinum (strain Loch Maree / Type A3).